A 707-amino-acid chain; its full sequence is Matrix metalloproteinase-9 (707 aa).

Residues 1-19 (MSLWQPLVLVLLVLGCCFA) form the signal peptide. Residues 20-93 (APRQRQSTLV…GELDSATLKA (74 aa)) constitute a propeptide, activation peptide. An N-linked (GlcNAc...) asparagine glycan is attached at Asn38. The Cysteine switch motif lies at 97–104 (PRCGVPDL). A Zn(2+)-binding site is contributed by Cys99. N-linked (GlcNAc...) asparagine glycosylation is found at Asn120 and Asn127. Ca(2+)-binding residues include Asp131 and Asp165. Residues His175 and Asp177 each contribute to the Zn(2+) site. Asp182, Gly183, Asp185, and Leu187 together coordinate Ca(2+). His190 lines the Zn(2+) pocket. Ca(2+) contacts are provided by Gly197, Gln199, and Asp201. His203 contacts Zn(2+). Ca(2+) contacts are provided by Asp205, Asp206, and Glu208. Fibronectin type-II domains lie at 225–273 (ADGA…FCPS), 283–331 (ADGK…FCPT), and 342–390 (SAGE…FCPD). 6 disulfide bridges follow: Cys230–Cys256, Cys244–Cys271, Cys288–Cys314, Cys302–Cys329, Cys347–Cys373, and Cys361–Cys388. His401 contacts Zn(2+). The active site involves Glu402. His405 and His411 together coordinate Zn(2+). The interval 431 to 508 (LHKDDVNGIR…AGPSTATTVP (78 aa)) is disordered. 2 stretches are compositionally biased toward pro residues: residues 452-475 (RPPTTTTPQPTAPPTVCPTGPPTV) and 486-499 (TGPPSAGPTGPPTA). A disulfide bridge links Cys516 with Cys704. Hemopexin repeat units follow at residues 518 to 563 (VNIF…WPAL), 564 to 608 (PRKL…GLGA), 610 to 657 (VAQV…FPGV), and 658 to 704 (PLDT…ILQC).

It belongs to the peptidase M10A family. As to quaternary structure, exists as monomer or homodimer; disulfide-linked. Also exists as heterodimer with LCN2. Macrophages and transformed cell lines produce only the monomeric form. Interacts with ECM1. In terms of assembly, (Microbial infection) Interacts with Staphylococcus aureus protein SSL5; this interaction inhibits MMP9 activity. Zn(2+) is required as a cofactor. Ca(2+) serves as cofactor. Processing of the precursor yields different active forms of 64, 67 and 82 kDa. Sequentially processing by MMP3 yields the 82 kDa matrix metalloproteinase-9. In terms of processing, N- and O-glycosylated. In terms of tissue distribution, detected in neutrophils (at protein level). Produced by normal alveolar macrophages and granulocytes.

It localises to the secreted. It is found in the extracellular space. The protein localises to the extracellular matrix. The catalysed reaction is Cleavage of gelatin types I and V and collagen types IV and V.. With respect to regulation, inhibited by histatin-3 1/24 (histatin-5). Inhibited by ECM1. Its function is as follows. Matrix metalloproteinase that plays an essential role in local proteolysis of the extracellular matrix and in leukocyte migration. Could play a role in bone osteoclastic resorption. Cleaves KiSS1 at a Gly-|-Leu bond. Cleaves NINJ1 to generate the Secreted ninjurin-1 form. Cleaves type IV and type V collagen into large C-terminal three quarter fragments and shorter N-terminal one quarter fragments. Degrades fibronectin but not laminin or Pz-peptide. The chain is Matrix metalloproteinase-9 (MMP9) from Homo sapiens (Human).